We begin with the raw amino-acid sequence, 336 residues long: Holliday junction branch migration complex subunit RuvB (336 aa).

The interval 1 to 182 is large ATPase domain (RuvB-L); the sequence is MKERIVNLET…FGMSFRMQFY (182 aa). ATP-binding positions include Leu-21, Arg-22, Gly-63, Lys-66, Thr-67, Ser-68, 129–131, Arg-172, Tyr-182, and Arg-219; that span reads EDF. A Mg(2+)-binding site is contributed by Thr-67. The interval 183-253 is small ATPAse domain (RuvB-S); that stretch reads SPSELALIIK…ITLHALNELG (71 aa). The interval 256 to 336 is head domain (RuvB-H); that stretch reads ELGFDEADLA…IPTLNPQTLF (81 aa). DNA is bound by residues Arg-310 and Arg-315.

The protein belongs to the RuvB family. As to quaternary structure, homohexamer. Forms an RuvA(8)-RuvB(12)-Holliday junction (HJ) complex. HJ DNA is sandwiched between 2 RuvA tetramers; dsDNA enters through RuvA and exits via RuvB. An RuvB hexamer assembles on each DNA strand where it exits the tetramer. Each RuvB hexamer is contacted by two RuvA subunits (via domain III) on 2 adjacent RuvB subunits; this complex drives branch migration. In the full resolvosome a probable DNA-RuvA(4)-RuvB(12)-RuvC(2) complex forms which resolves the HJ.

It is found in the cytoplasm. It carries out the reaction ATP + H2O = ADP + phosphate + H(+). In terms of biological role, the RuvA-RuvB-RuvC complex processes Holliday junction (HJ) DNA during genetic recombination and DNA repair, while the RuvA-RuvB complex plays an important role in the rescue of blocked DNA replication forks via replication fork reversal (RFR). RuvA specifically binds to HJ cruciform DNA, conferring on it an open structure. The RuvB hexamer acts as an ATP-dependent pump, pulling dsDNA into and through the RuvAB complex. RuvB forms 2 homohexamers on either side of HJ DNA bound by 1 or 2 RuvA tetramers; 4 subunits per hexamer contact DNA at a time. Coordinated motions by a converter formed by DNA-disengaged RuvB subunits stimulates ATP hydrolysis and nucleotide exchange. Immobilization of the converter enables RuvB to convert the ATP-contained energy into a lever motion, pulling 2 nucleotides of DNA out of the RuvA tetramer per ATP hydrolyzed, thus driving DNA branch migration. The RuvB motors rotate together with the DNA substrate, which together with the progressing nucleotide cycle form the mechanistic basis for DNA recombination by continuous HJ branch migration. Branch migration allows RuvC to scan DNA until it finds its consensus sequence, where it cleaves and resolves cruciform DNA. This Helicobacter pylori (strain Shi470) protein is Holliday junction branch migration complex subunit RuvB.